A 492-amino-acid chain; its full sequence is UDP-N-acetylmuramoyl-L-alanyl-D-glutamate--2,6-diaminopimelate ligase (492 aa).

Serine 30 is a UDP-N-acetyl-alpha-D-muramoyl-L-alanyl-D-glutamate binding site. An ATP-binding site is contributed by 114–120 (GTNGKTS). UDP-N-acetyl-alpha-D-muramoyl-L-alanyl-D-glutamate-binding positions include 156-157 (TT), serine 183, glutamine 189, and arginine 191. Residue lysine 223 is modified to N6-carboxylysine. Residues arginine 389, 413–416 (DNPR), glycine 462, and glutamate 466 contribute to the meso-2,6-diaminopimelate site. The Meso-diaminopimelate recognition motif motif lies at 413–416 (DNPR).

It belongs to the MurCDEF family. MurE subfamily. Mg(2+) is required as a cofactor. Carboxylation is probably crucial for Mg(2+) binding and, consequently, for the gamma-phosphate positioning of ATP.

It localises to the cytoplasm. It carries out the reaction UDP-N-acetyl-alpha-D-muramoyl-L-alanyl-D-glutamate + meso-2,6-diaminopimelate + ATP = UDP-N-acetyl-alpha-D-muramoyl-L-alanyl-gamma-D-glutamyl-meso-2,6-diaminopimelate + ADP + phosphate + H(+). It functions in the pathway cell wall biogenesis; peptidoglycan biosynthesis. Functionally, catalyzes the addition of meso-diaminopimelic acid to the nucleotide precursor UDP-N-acetylmuramoyl-L-alanyl-D-glutamate (UMAG) in the biosynthesis of bacterial cell-wall peptidoglycan. This Neisseria meningitidis serogroup A / serotype 4A (strain DSM 15465 / Z2491) protein is UDP-N-acetylmuramoyl-L-alanyl-D-glutamate--2,6-diaminopimelate ligase.